The sequence spans 336 residues: Holliday junction branch migration complex subunit RuvB (336 aa).

Residues 1–180 (MRRTGIRLSW…FGIVEHLEYY (180 aa)) form a large ATPase domain (RuvB-L) region. ATP is bound by residues leucine 18, arginine 19, glycine 60, lysine 63, threonine 64, threonine 65, 127-129 (EDF), arginine 170, tyrosine 180, and arginine 217. Position 64 (threonine 64) interacts with Mg(2+). A small ATPAse domain (RuvB-S) region spans residues 181–251 (TPEELAQGVM…RALEALAALG (71 aa)). The interval 254–336 (ELGLEKRDRE…PPPVGPLLEP (83 aa)) is head domain (RuvB-H). The DNA site is built by arginine 309 and arginine 314.

The protein belongs to the RuvB family. As to quaternary structure, homohexamer. Forms an RuvA(8)-RuvB(12)-Holliday junction (HJ) complex. HJ DNA is sandwiched between 2 RuvA tetramers; dsDNA enters through RuvA and exits via RuvB. An RuvB hexamer assembles on each DNA strand where it exits the tetramer. Each RuvB hexamer is contacted by two RuvA subunits (via domain III) on 2 adjacent RuvB subunits; this complex drives branch migration. In the full resolvosome a probable DNA-RuvA(4)-RuvB(12)-RuvC(2) complex forms which resolves the HJ.

The protein localises to the cytoplasm. It catalyses the reaction ATP + H2O = ADP + phosphate + H(+). Functionally, the RuvA-RuvB-RuvC complex processes Holliday junction (HJ) DNA during genetic recombination and DNA repair, while the RuvA-RuvB complex plays an important role in the rescue of blocked DNA replication forks via replication fork reversal (RFR). RuvA specifically binds to HJ cruciform DNA, conferring on it an open structure. The RuvB hexamer acts as an ATP-dependent pump, pulling dsDNA into and through the RuvAB complex. RuvB forms 2 homohexamers on either side of HJ DNA bound by 1 or 2 RuvA tetramers; 4 subunits per hexamer contact DNA at a time. Coordinated motions by a converter formed by DNA-disengaged RuvB subunits stimulates ATP hydrolysis and nucleotide exchange. Immobilization of the converter enables RuvB to convert the ATP-contained energy into a lever motion, pulling 2 nucleotides of DNA out of the RuvA tetramer per ATP hydrolyzed, thus driving DNA branch migration. The RuvB motors rotate together with the DNA substrate, which together with the progressing nucleotide cycle form the mechanistic basis for DNA recombination by continuous HJ branch migration. Branch migration allows RuvC to scan DNA until it finds its consensus sequence, where it cleaves and resolves cruciform DNA. This chain is Holliday junction branch migration complex subunit RuvB, found in Thermus thermophilus (strain ATCC BAA-163 / DSM 7039 / HB27).